The sequence spans 304 residues: Acetaldehyde dehydrogenase (304 aa).

Catalysis depends on C131, which acts as the Acyl-thioester intermediate. NAD(+)-binding positions include 162–170 (SAGPGTRKN) and N273.

The protein belongs to the acetaldehyde dehydrogenase family.

It catalyses the reaction acetaldehyde + NAD(+) + CoA = acetyl-CoA + NADH + H(+). The polypeptide is Acetaldehyde dehydrogenase (Polaromonas naphthalenivorans (strain CJ2)).